We begin with the raw amino-acid sequence, 490 residues long: NADP-reducing hydrogenase subunit HndC (490 aa).

4Fe-4S ferredoxin-type domains are found at residues 433–462 and 463–490; these read LTYT…GTKK and QPHT…IIKQ.

This sequence belongs to the complex I 51 kDa subunit family. As to quaternary structure, heterotetramer composed of HndA, HndB, HndC and HndD subunits. HndC is probably the reducing subunit.

The enzyme catalyses H2 + NADP(+) = NADPH + H(+). With respect to regulation, inhibited by oxygen. Its function is as follows. Catalyzes the reduction of NADP in the presence of molecular H2 to yield NADPH. The chain is NADP-reducing hydrogenase subunit HndC (hndC) from Solidesulfovibrio fructosivorans (Desulfovibrio fructosivorans).